Here is a 423-residue protein sequence, read N- to C-terminus: Gamma-glutamyl phosphate reductase (423 aa).

The protein belongs to the gamma-glutamyl phosphate reductase family.

The protein resides in the cytoplasm. The enzyme catalyses L-glutamate 5-semialdehyde + phosphate + NADP(+) = L-glutamyl 5-phosphate + NADPH + H(+). Its pathway is amino-acid biosynthesis; L-proline biosynthesis; L-glutamate 5-semialdehyde from L-glutamate: step 2/2. Its function is as follows. Catalyzes the NADPH-dependent reduction of L-glutamate 5-phosphate into L-glutamate 5-semialdehyde and phosphate. The product spontaneously undergoes cyclization to form 1-pyrroline-5-carboxylate. This is Gamma-glutamyl phosphate reductase from Brucella suis (strain ATCC 23445 / NCTC 10510).